The chain runs to 357 residues: Alanine racemase (357 aa).

K33 (proton acceptor; specific for D-alanine) is an active-site residue. At K33 the chain carries N6-(pyridoxal phosphate)lysine. R129 serves as a coordination point for substrate. Catalysis depends on Y253, which acts as the Proton acceptor; specific for L-alanine. M301 contacts substrate.

This sequence belongs to the alanine racemase family. The cofactor is pyridoxal 5'-phosphate.

The enzyme catalyses L-alanine = D-alanine. The protein operates within amino-acid biosynthesis; D-alanine biosynthesis; D-alanine from L-alanine: step 1/1. Catalyzes the interconversion of L-alanine and D-alanine. May also act on other amino acids. In Pseudomonas savastanoi pv. phaseolicola (strain 1448A / Race 6) (Pseudomonas syringae pv. phaseolicola (strain 1448A / Race 6)), this protein is Alanine racemase (alr).